Consider the following 137-residue polypeptide: Small heat shock protein IbpA (137 aa).

The region spanning 28–137 is the sHSP domain; the sequence is NQSNGGYPPY…SLKPRRIEIK (110 aa).

This sequence belongs to the small heat shock protein (HSP20) family. In terms of assembly, monomer. Forms homomultimers of about 100-150 subunits at optimal growth temperatures. Conformation changes to monomers at high temperatures or high ionic concentrations.

Its subcellular location is the cytoplasm. In terms of biological role, associates with aggregated proteins, together with IbpB, to stabilize and protect them from irreversible denaturation and extensive proteolysis during heat shock and oxidative stress. Aggregated proteins bound to the IbpAB complex are more efficiently refolded and reactivated by the ATP-dependent chaperone systems ClpB and DnaK/DnaJ/GrpE. Its activity is ATP-independent. This is Small heat shock protein IbpA from Yersinia pseudotuberculosis serotype O:1b (strain IP 31758).